The chain runs to 29 residues: Cyclotide cter-K (29 aa).

A cross-link (cyclopeptide (His-Asn)) is located at residues 1–29 (HEPCGESCVFIPCITTVVGCSCKNKVCYN). 3 disulfides stabilise this stretch: C4-C20, C8-C22, and C13-C27.

In terms of processing, contains 3 disulfide bonds. Post-translationally, this is a cyclic peptide.

Functionally, probably participates in a plant defense mechanism. The chain is Cyclotide cter-K from Clitoria ternatea (Butterfly pea).